We begin with the raw amino-acid sequence, 535 residues long: CTP synthase (535 aa).

Positions 1–267 (MTKYIFVTGG…DQIVCDHLKL (267 aa)) are amidoligase domain. Ser13 contributes to the CTP binding site. Residue Ser13 coordinates UTP. ATP is bound at residue 14–19 (SLGKGI). Residue Tyr54 participates in L-glutamine binding. Asp71 provides a ligand contact to ATP. Residues Asp71 and Glu141 each contribute to the Mg(2+) site. Residues 148–150 (DIE), 188–193 (KTKPTQ), and Lys224 each bind CTP. UTP is bound by residues 188–193 (KTKPTQ) and Lys224. 240-242 (RDA) lines the ATP pocket. One can recognise a Glutamine amidotransferase type-1 domain in the interval 292–534 (KIALVGKYVE…VSASITNKES (243 aa)). Gly354 contributes to the L-glutamine binding site. The active-site Nucleophile; for glutamine hydrolysis is the Cys381. L-glutamine contacts are provided by residues 382–385 (LGMQ), Glu405, and Arg462. Residues His507 and Glu509 contribute to the active site.

It belongs to the CTP synthase family. In terms of assembly, homotetramer.

It catalyses the reaction UTP + L-glutamine + ATP + H2O = CTP + L-glutamate + ADP + phosphate + 2 H(+). It carries out the reaction L-glutamine + H2O = L-glutamate + NH4(+). The catalysed reaction is UTP + NH4(+) + ATP = CTP + ADP + phosphate + 2 H(+). It functions in the pathway pyrimidine metabolism; CTP biosynthesis via de novo pathway; CTP from UDP: step 2/2. Its activity is regulated as follows. Allosterically activated by GTP, when glutamine is the substrate; GTP has no effect on the reaction when ammonia is the substrate. The allosteric effector GTP functions by stabilizing the protein conformation that binds the tetrahedral intermediate(s) formed during glutamine hydrolysis. Inhibited by the product CTP, via allosteric rather than competitive inhibition. In terms of biological role, catalyzes the ATP-dependent amination of UTP to CTP with either L-glutamine or ammonia as the source of nitrogen. Regulates intracellular CTP levels through interactions with the four ribonucleotide triphosphates. The polypeptide is CTP synthase (Bacillus mycoides (strain KBAB4) (Bacillus weihenstephanensis)).